A 932-amino-acid polypeptide reads, in one-letter code: Isoleucine--tRNA ligase (932 aa).

Residues 57–67 (PYANGDIHIGT) carry the 'HIGH' region motif. Glu559 provides a ligand contact to L-isoleucyl-5'-AMP. The 'KMSKS' region motif lies at 600–604 (KMSKS). ATP is bound at residue Lys603. 4 residues coordinate Zn(2+): Cys899, Cys902, Cys919, and Cys922.

Belongs to the class-I aminoacyl-tRNA synthetase family. IleS type 1 subfamily. Monomer. It depends on Zn(2+) as a cofactor.

It is found in the cytoplasm. It catalyses the reaction tRNA(Ile) + L-isoleucine + ATP = L-isoleucyl-tRNA(Ile) + AMP + diphosphate. Functionally, catalyzes the attachment of isoleucine to tRNA(Ile). As IleRS can inadvertently accommodate and process structurally similar amino acids such as valine, to avoid such errors it has two additional distinct tRNA(Ile)-dependent editing activities. One activity is designated as 'pretransfer' editing and involves the hydrolysis of activated Val-AMP. The other activity is designated 'posttransfer' editing and involves deacylation of mischarged Val-tRNA(Ile). The chain is Isoleucine--tRNA ligase from Caldanaerobacter subterraneus subsp. tengcongensis (strain DSM 15242 / JCM 11007 / NBRC 100824 / MB4) (Thermoanaerobacter tengcongensis).